Reading from the N-terminus, the 290-residue chain is Pantothenate synthetase (290 aa).

An ATP-binding site is contributed by 34–41 (MGNLHDGH). Catalysis depends on His-41, which acts as the Proton donor. Residue Gln-65 coordinates (R)-pantoate. Gln-65 lines the beta-alanine pocket. 156–159 (GKKD) is a binding site for ATP. Gln-162 provides a ligand contact to (R)-pantoate. ATP-binding positions include Ala-185 and 193–196 (LSSR).

It belongs to the pantothenate synthetase family. In terms of assembly, homodimer.

The protein resides in the cytoplasm. The enzyme catalyses (R)-pantoate + beta-alanine + ATP = (R)-pantothenate + AMP + diphosphate + H(+). Its pathway is cofactor biosynthesis; (R)-pantothenate biosynthesis; (R)-pantothenate from (R)-pantoate and beta-alanine: step 1/1. Catalyzes the condensation of pantoate with beta-alanine in an ATP-dependent reaction via a pantoyl-adenylate intermediate. This Acidovorax ebreus (strain TPSY) (Diaphorobacter sp. (strain TPSY)) protein is Pantothenate synthetase.